We begin with the raw amino-acid sequence, 759 residues long: Solute carrier family 26 member 6 (759 aa).

Residues 1 to 115 (MGLADASGPR…PQGLAYALLA (115 aa)) lie on the Cytoplasmic side of the membrane. A helical membrane pass occupies residues 116–136 (GLPPVFGLYSSFYPVFIYFLF). Over 137–186 (GTSRHISVGTFAVMSVMVGSVTESLAPQALNDSMINETARDAARVQVAST) the chain is Extracellular. 2 N-linked (GlcNAc) asparagine glycosylation sites follow: asparagine 167 and asparagine 172. The helical transmembrane segment at 187-207 (LSVLVGLFQVGLGLIHFGFVV) threads the bilayer. At 208–263 (TYLSEPLVRGYTTAAAVQVFVSQLKYVFGLHLSSHSGPLSLIYTVLEVCWKLPQSK) the chain is on the cytoplasmic side. Residues 264-284 (VGTVVTAAVAGVVLVVVKLLN) form a helical membrane-spanning segment. The Extracellular segment spans residues 285–293 (DKLQQQLPM). The chain crosses the membrane as a helical span at residues 294–314 (PIPGELLTLIGATGISYGMGL). Topologically, residues 315-347 (KHRFEVDVVGNIPAGLVPPVAPNTQLFSKLVGS) are cytoplasmic. A helical transmembrane segment spans residues 348–368 (AFTIAVVGFAIAISLGKIFAL). At 369-379 (RHGYRVDSNQE) the chain is on the extracellular side. The helical transmembrane segment at 380–400 (LVALGLSNLIGGIFQCFPVSC) threads the bilayer. Residues 401-416 (SMSRSLVQESTGGNSQ) are Cytoplasmic-facing. A helical membrane pass occupies residues 417 to 437 (VAGAISSLFILLIIVKLGELF). At 438–484 (HDLPKAVLAAIIIVNLKGMLRQLSDMRSLWKANRADLLIWLVTFTAT) the chain is on the extracellular side. The chain crosses the membrane as a helical span at residues 485-505 (ILLNLDLGLVVAVIFSLLLVV). Residues 506 to 759 (VRTQMPHYSV…PDSPVSVTRL (254 aa)) lie on the Cytoplasmic side of the membrane. An STAS domain is found at 530–742 (EYSEAKEVRG…ASVHDAVTFA (213 aa)). Phosphoserine; by PKC is present on residues asparagine 553 and lysine 582. A Phosphoserine modification is found at serine 616. A disordered region spans residues 636 to 657 (GDKMEDATANGQEDSKAPDGST). Residues serine 752 and serine 755 each carry the phosphoserine modification.

The protein belongs to the SLC26A/SulP transporter (TC 2.A.53) family. In terms of assembly, interacts (via C-terminal domain) with PDZK1 (via C-terminal PDZ domain); the interaction induces chloride and oxalate exchange transport. Interacts with CFTR and SLC26A3. Interacts with AHCYL1; the interaction increases SLC26A6 activity. As to quaternary structure, interacts with NHERF1 (via the PDZ domains) and NHERF2 (via the PDZ domains). Interacts (via C-terminal cytoplasmic domain) with CA2; the interaction stimulates chloride-bicarbonate exchange activity. Interacts with NHERF1 (via the PDZ domains) and NHERF2 (via the PDZ domains). In terms of processing, phosphorylated on serine residues by PKC; the phosphorylation disrupts interaction with carbonic anhydrase CA2 and reduces bicarbonate transport activity in a phorbol myristate acetate (PMA)-induced manner. Post-translationally, glycosylation at Asn-167 and Asn-172 positively regulates its chloride oxalate exchanger activity. Ubiquitous. Highest levels in kidney and pancreas. Lower expression in heart, skeletal muscle, liver and placenta. Also found in lung and brain. In terms of tissue distribution, ubiquitously expressed. Highest levels expressed in the kidney and pancreas. As to expression, expressed weakly in placenta, lung, liver and pancreas. Expressed in heart, brain, placenta, lung, liver, kidney, pancreas, spleen, thymus, prostate, testis and ovary.

It localises to the cell membrane. The protein localises to the apical cell membrane. It is found in the cytoplasmic vesicle membrane. The protein resides in the microsome. Its subcellular location is the basolateral cell membrane. It carries out the reaction 2 hydrogencarbonate(in) + chloride(out) = 2 hydrogencarbonate(out) + chloride(in). The catalysed reaction is oxalate(in) + chloride(out) = oxalate(out) + chloride(in). The enzyme catalyses oxalate(in) + formate(out) = oxalate(out) + formate(in). It catalyses the reaction oxalate(in) + sulfate(out) = oxalate(out) + sulfate(in). It carries out the reaction 2 hydrogencarbonate(out) + sulfate(in) = 2 hydrogencarbonate(in) + sulfate(out). Oxalate transport activity is inhibited by 4,4'-diisothiocyanatostilbene-2,2'-disulfonic acid (DIDS). With respect to regulation, chloride, bicarbonate and sulfate transport activities are inhibited by 4,4'-diisothiocyanatostilbene-2,2'-disulfonic acid (DIDS). Its function is as follows. Apical membrane anion-exchanger with wide epithelial distribution that plays a role as a component of the pH buffering system for maintaining acid-base homeostasis. Acts as a versatile DIDS-sensitive inorganic and organic anion transporter that mediates the uptake of monovalent anions like chloride, bicarbonate, formate and hydroxyl ion and divalent anions like sulfate and oxalate. Functions in multiple exchange modes involving pairs of these anions, which include chloride-bicarbonate, chloride-oxalate, oxalate-formate, oxalate-sulfate and chloride-formate exchange. Apical membrane chloride-bicarbonate exchanger that mediates luminal chloride absorption and bicarbonate secretion by the small intestinal brush border membrane and contributes to intracellular pH regulation in the duodenal upper villous epithelium during proton-coupled peptide absorption, possibly by providing a bicarbonate import pathway. Also mediates intestinal chloride absorption and oxalate secretion, thereby preventing hyperoxaluria and calcium oxalate urolithiasis. Transepithelial oxalate secretion, chloride-formate, chloride-oxalate and chloride-bicarbonate transport activities in the duodenum are inhibited by PKC activation in a calcium-independent manner. The apical membrane chloride-bicarbonate exchanger also provides a major route for fluid and bicarbonate secretion into the proximal tubules of the kidney as well as into the proximal part of the interlobular pancreatic ductal tree, where it mediates electrogenic chloride-bicarbonate exchange with a chloride-bicarbonate stoichiometry of 1:2, and hence will dilute and alkalinize protein-rich acinar secretion. Also mediates the transcellular sulfate absorption and oxalate secretion across the apical membrane in the duodenum and the formate ion efflux at the apical brush border of cells in the proximal tubules of kidney. Plays a role in sperm capacitation by increasing intracellular pH. Apical membrane chloride-bicarbonate exchanger. Its association with carbonic anhydrase CA2 forms a bicarbonate transport metabolon; hence maximizes the local concentration of bicarbonate at the transporter site. This is Solute carrier family 26 member 6 (SLC26A6) from Homo sapiens (Human).